We begin with the raw amino-acid sequence, 919 residues long: Bifunctional uridylyltransferase/uridylyl-removing enzyme (919 aa).

Residues 1–373 (MTDPKVPRQR…LAGFNAKSRM (373 aa)) are uridylyltransferase. Positions 374 to 727 (LKGYTVFGGK…CEFDEERGAT (354 aa)) are uridylyl-removing. In terms of domain architecture, HD spans 489-611 (VDEHTIRAIG…VQSLERLRHL (123 aa)). 2 consecutive ACT domains span residues 728–811 (LVTV…LAKR) and 839–919 (VIEV…LEPA).

It belongs to the GlnD family. Requires Mg(2+) as cofactor.

The enzyme catalyses [protein-PII]-L-tyrosine + UTP = [protein-PII]-uridylyl-L-tyrosine + diphosphate. The catalysed reaction is [protein-PII]-uridylyl-L-tyrosine + H2O = [protein-PII]-L-tyrosine + UMP + H(+). Uridylyltransferase (UTase) activity is inhibited by glutamine, while glutamine activates uridylyl-removing (UR) activity. In terms of biological role, modifies, by uridylylation and deuridylylation, the PII regulatory proteins (GlnB and homologs), in response to the nitrogen status of the cell that GlnD senses through the glutamine level. Under low glutamine levels, catalyzes the conversion of the PII proteins and UTP to PII-UMP and PPi, while under higher glutamine levels, GlnD hydrolyzes PII-UMP to PII and UMP (deuridylylation). Thus, controls uridylylation state and activity of the PII proteins, and plays an important role in the regulation of nitrogen assimilation and metabolism. The polypeptide is Bifunctional uridylyltransferase/uridylyl-removing enzyme (Erythrobacter litoralis (strain HTCC2594)).